The primary structure comprises 286 residues: P2R1A-PPP2R2A-interacting phosphatase regulator 1 (286 aa).

Positions 1–46 are disordered; that stretch reads MAQEKMELDLELPAGTGASPAEGGGPGSGGLRRSNSAPLIHGLSDS. Position 34 is a phosphoserine (S34). S36 bears the Phosphoserine; by CHEK1 mark. Phosphoserine is present on residues S44, S47, S61, and S75. A Glycyl lysine isopeptide (Lys-Gly) (interchain with G-Cter in SUMO1) cross-link involves residue K88. A phosphoserine mark is found at S142 and S146. The residue at position 148 (T148) is a Phosphothreonine. Residues 166–187 form a disordered region; that stretch reads SNGLPPSPIPSPTTRFTTRRSQ. Residues 177 to 187 show a composition bias toward low complexity; sequence PTTRFTTRRSQ. S186 and S188 each carry phosphoserine. A disordered region spans residues 238-286; it reads VSSDTLDGNSSSAGSSCNSPAKVSTTTDSPVSPAQAASPFIPVDELSSK. The segment covering 245–256 has biased composition (low complexity); it reads GNSSSAGSSCNS. Positions 258–269 are enriched in polar residues; sequence AKVSTTTDSPVS. Phosphoserine is present on residues S266, S269, and S275.

The protein belongs to the FAM122 family. Interacts with PPP2CA and PPP2R1A. Interacts (via its N-terminus) with PPP2R2A; the interaction is direct and this interaction inhibits PP2A activity. The CHEK1-mediated Ser-36 phosphorylated form interacts with 14-3-3 proteins. CHEK1-mediated phosphorylation at Ser-36 negatively regulates its ability to inhibit serine/threonine-protein phosphatase 2A (PP2A) activity. Phosphorylation leads to its release from the PP2A complex and its sequestration by 14-3-3 proteins in the cytoplasm resulting in its inability to translocate to the nucleus, where it otherwise inhibits PP2A.

It localises to the nucleus. It is found in the cytoplasm. Acts as an inhibitor of serine/threonine-protein phosphatase 2A (PP2A) activity. Inhibits PP2A activity by blocking the substrate binding site on PPP2R2A and the active site of PPP2CA. Potentiates ubiquitin-mediated proteasomal degradation of serine/threonine-protein phosphatase 2A catalytic subunit alpha (PPP2CA). Inhibits PP2A-mediated dephosphorylation of WEE1, promoting ubiquitin-mediated proteolysis of WEE1, thereby releasing G2/M checkpoint. In Rattus norvegicus (Rat), this protein is P2R1A-PPP2R2A-interacting phosphatase regulator 1.